A 244-amino-acid polypeptide reads, in one-letter code: MPRPSLCADSGGGMMTTLTARPEAITFDPQQSAQIVVDMQNAYATPGGYLDLAGFDVSTTRPVIANIQTAVTAARAAGMLIIWFQNGWDEQYVEAGGPGSPNFHKSNALKTMRKQPQLQGKLLAKGSWDYQLVDELVPQPGDIVLPKPRYSGFFNTPLDSILRSRGIRHLVFTGIATNVCVESTLRDGFFLEHFGVVLEDATHQAGPEFAQKAALFNIETFFGWVSDVETFCDALSPTSFARIA.

Aspartate 38 (proton acceptor) is an active-site residue. The active site involves lysine 147. The active-site Nucleophile is cysteine 180.

This sequence belongs to the isochorismatase family. RutB subfamily.

The catalysed reaction is (Z)-3-ureidoacrylate + H2O + H(+) = (Z)-3-aminoacrylate + NH4(+) + CO2. It catalyses the reaction (Z)-3-ureidoacrylate + H2O = (Z)-3-aminoacrylate + carbamate + H(+). The enzyme catalyses (Z)-2-methylureidoacrylate + H2O + H(+) = (Z)-2-methylaminoacrylate + NH4(+) + CO2. Its function is as follows. Hydrolyzes ureidoacrylate to form aminoacrylate and carbamate. The carbamate hydrolyzes spontaneously, thereby releasing one of the nitrogen atoms of the pyrimidine ring as ammonia and one of its carbon atoms as CO2. The sequence is that of Ureidoacrylate amidohydrolase RutB from Shigella flexneri serotype X (strain 2002017).